Reading from the N-terminus, the 509-residue chain is Lanosterol 14-alpha demethylase (509 aa).

The helical transmembrane segment at 30–50 (GNLLSMLLIACAFTLSLVYLI) threads the bilayer. Position 455 (Cys455) interacts with heme.

Belongs to the cytochrome P450 family. Heme serves as cofactor. Ubiquitinated by MARCHF6, leading to proteasomal degradation. In terms of tissue distribution, ubiquitously expressed with highest levels in testis, ovary, adrenal, prostate, liver, kidney and lung.

It is found in the endoplasmic reticulum membrane. The protein resides in the microsome membrane. It carries out the reaction a 14alpha-methyl steroid + 3 reduced [NADPH--hemoprotein reductase] + 3 O2 = a Delta(14) steroid + formate + 3 oxidized [NADPH--hemoprotein reductase] + 4 H2O + 4 H(+). It catalyses the reaction lanosterol + 3 reduced [NADPH--hemoprotein reductase] + 3 O2 = 4,4-dimethyl-5alpha-cholesta-8,14,24-trien-3beta-ol + formate + 3 oxidized [NADPH--hemoprotein reductase] + 4 H2O + 4 H(+). The catalysed reaction is 24,25-dihydrolanosterol + 3 reduced [NADPH--hemoprotein reductase] + 3 O2 = 4,4-dimethyl-8,14-cholestadien-3beta-ol + formate + 3 oxidized [NADPH--hemoprotein reductase] + 4 H2O + 4 H(+). The enzyme catalyses a 14alpha-methyl steroid + reduced [NADPH--hemoprotein reductase] + O2 = a 14alpha-hydroxymethyl steroid + oxidized [NADPH--hemoprotein reductase] + H2O + H(+). It carries out the reaction a 14alpha-hydroxymethyl steroid + reduced [NADPH--hemoprotein reductase] + O2 = a 14alpha-formyl steroid + oxidized [NADPH--hemoprotein reductase] + 2 H2O + H(+). It catalyses the reaction a 14alpha-formyl steroid + reduced [NADPH--hemoprotein reductase] + O2 = a Delta(14) steroid + formate + oxidized [NADPH--hemoprotein reductase] + H2O + 2 H(+). The catalysed reaction is lanosterol + reduced [NADPH--hemoprotein reductase] + O2 = 32-hydroxylanosterol + oxidized [NADPH--hemoprotein reductase] + H2O + H(+). The enzyme catalyses 32-hydroxylanosterol + reduced [NADPH--hemoprotein reductase] + O2 = 32-oxolanosterol + oxidized [NADPH--hemoprotein reductase] + 2 H2O + H(+). It carries out the reaction 32-oxolanosterol + reduced [NADPH--hemoprotein reductase] + O2 = 4,4-dimethyl-5alpha-cholesta-8,14,24-trien-3beta-ol + formate + oxidized [NADPH--hemoprotein reductase] + H2O + 2 H(+). It catalyses the reaction 24,25-dihydrolanosterol + reduced [NADPH--hemoprotein reductase] + O2 = 32-hydroxy-24,25-dihydrolanosterol + oxidized [NADPH--hemoprotein reductase] + H2O + H(+). The catalysed reaction is 32-hydroxy-24,25-dihydrolanosterol + reduced [NADPH--hemoprotein reductase] + O2 = 32-oxo-24,25-dihydrolanosterol + oxidized [NADPH--hemoprotein reductase] + 2 H2O + H(+). The enzyme catalyses 32-oxo-24,25-dihydrolanosterol + reduced [NADPH--hemoprotein reductase] + O2 = 4,4-dimethyl-8,14-cholestadien-3beta-ol + formate + oxidized [NADPH--hemoprotein reductase] + H2O + 2 H(+). It functions in the pathway steroid biosynthesis; zymosterol biosynthesis; zymosterol from lanosterol: step 1/6. Inhibited by azalanstat. Inhibited by azole antifungal agents ketoconazole, itraconazole and fluconazole. Functionally, sterol 14alpha-demethylase that plays a critical role in the cholesterol biosynthesis pathway, being cholesterol the major sterol component in mammalian membranes as well as a precursor for bile acid and steroid hormone synthesis. Cytochrome P450 monooxygenase that catalyzes the three-step oxidative removal of the 14alpha-methyl group (C-32) of sterols such as lanosterol (lanosta-8,24-dien-3beta-ol) and 24,25-dihydrolanosterol (DHL) in the form of formate, and converts the sterols to 4,4-dimethyl-5alpha-cholesta-8,14,24-trien-3beta-ol and 4,4-dimethyl-8,14-cholestadien-3beta-ol, respectively, which are intermediates of cholesterol biosynthesis. Can also demethylate substrates not intrinsic to mammals, such as eburicol (24-methylene-24,25-dihydrolanosterol), but at a lower rate than DHL. This chain is Lanosterol 14-alpha demethylase, found in Homo sapiens (Human).